A 113-amino-acid chain; its full sequence is UPF0482 protein YnfB (113 aa).

Residues 1-28 (MKITLSKRIGLLAFLLPCALALSTTVHA) form the signal peptide.

It belongs to the UPF0482 family.

The protein is UPF0482 protein YnfB of Shigella dysenteriae serotype 1 (strain Sd197).